Consider the following 391-residue polypeptide: S-adenosylmethionine synthase (391 aa).

His-14 lines the ATP pocket. Mg(2+) is bound at residue Asp-16. Glu-42 contributes to the K(+) binding site. The L-methionine site is built by Glu-55 and Gln-98. Positions 98–108 (QSVDIAMGVDE) are flexible loop. Residues 172-174 (DGK), 238-239 (RF), Asp-247, 253-254 (RK), Ala-270, and Lys-274 each bind ATP. L-methionine is bound at residue Asp-247. Lys-278 provides a ligand contact to L-methionine.

This sequence belongs to the AdoMet synthase family. Homotetramer; dimer of dimers. It depends on Mg(2+) as a cofactor. K(+) serves as cofactor.

It is found in the cytoplasm. It carries out the reaction L-methionine + ATP + H2O = S-adenosyl-L-methionine + phosphate + diphosphate. Its pathway is amino-acid biosynthesis; S-adenosyl-L-methionine biosynthesis; S-adenosyl-L-methionine from L-methionine: step 1/1. Functionally, catalyzes the formation of S-adenosylmethionine (AdoMet) from methionine and ATP. The overall synthetic reaction is composed of two sequential steps, AdoMet formation and the subsequent tripolyphosphate hydrolysis which occurs prior to release of AdoMet from the enzyme. In Clostridium botulinum (strain Langeland / NCTC 10281 / Type F), this protein is S-adenosylmethionine synthase.